Consider the following 626-residue polypeptide: tRNA uridine 5-carboxymethylaminomethyl modification enzyme MnmG (626 aa).

13 to 18 contributes to the FAD binding site; that stretch reads GGGHAG. NAD(+) is bound at residue 273-287; the sequence is GPRYCPSIEDKIHRF.

The protein belongs to the MnmG family. In terms of assembly, homodimer. Heterotetramer of two MnmE and two MnmG subunits. Requires FAD as cofactor.

It is found in the cytoplasm. NAD-binding protein involved in the addition of a carboxymethylaminomethyl (cmnm) group at the wobble position (U34) of certain tRNAs, forming tRNA-cmnm(5)s(2)U34. The chain is tRNA uridine 5-carboxymethylaminomethyl modification enzyme MnmG from Acinetobacter baylyi (strain ATCC 33305 / BD413 / ADP1).